A 219-amino-acid chain; its full sequence is MAEVERKEEQAKIESGSNEQKERGLDGVNKGDAVGDGKEGGEAKKVQQSPFLTNAVPRKDEGKGGEERDNIDAAEVVEKQRKHLEENQSDEILFKARCKLYYFSEETKALEERAEGTMIIEMHSKSNLAKITMFRDQIGRLGCNHFINPRFKAQPHGKVSNGWMWMSTEDTVETDALRKKIQLFVVKFYSEEDFKRFGEEYDLGRAHNEKALKTKTNKK.

Basic and acidic residues-rich tracts occupy residues 1-12, 33-45, and 57-72; these read MAEVERKEEQAK, AVGD…EAKK, and PRKD…DNID. The disordered stretch occupies residues 1–72; that stretch reads MAEVERKEEQ…KGGEERDNID (72 aa). The RanBD1 domain occupies 70 to 210; sequence NIDAAEVVEK…YDLGRAHNEK (141 aa).

It belongs to the RANBP1 family.

It is found in the cytoplasm. The protein localises to the nucleus. Its function is as follows. Important for the export of protein containing nuclear export signal (NES) out of the nucleus. The sequence is that of Ran-specific GTPase-activating protein 1 (YRB1) from Encephalitozoon cuniculi (strain GB-M1) (Microsporidian parasite).